A 196-amino-acid polypeptide reads, in one-letter code: Ribonuclease HII (196 aa).

The 182-residue stretch at 15–196 (YIVAGIDEAG…RKSFRYSCFI (182 aa)) folds into the RNase H type-2 domain. A divalent metal cation-binding residues include Asp-21, Glu-22, and Asp-112.

The protein belongs to the RNase HII family. The cofactor is Mn(2+). Requires Mg(2+) as cofactor.

The protein resides in the cytoplasm. It carries out the reaction Endonucleolytic cleavage to 5'-phosphomonoester.. Endonuclease that specifically degrades the RNA of RNA-DNA hybrids. The sequence is that of Ribonuclease HII from Rickettsia canadensis (strain McKiel).